We begin with the raw amino-acid sequence, 317 residues long: Vacuolar arginine/histidine antiporter YPQ2 (317 aa).

The Vacuolar segment spans residues 1–13 (MSCSNGIWPTVSN). The region spanning 8-71 (WPTVSNLCGS…AKLTGQLLFQ (64 aa)) is the PQ-loop 1 domain. Residues 14–34 (LCGSLSFFTSVISLFPQIIET) traverse the membrane as a helical segment. Topologically, residues 35–39 (YRDKS) are cytoplasmic. A helical membrane pass occupies residues 40 to 62 (VDGLSPYFLLAWLCGDITSLIGA). The Vacuolar segment spans residues 63–71 (KLTGQLLFQ). A helical membrane pass occupies residues 72 to 94 (ILLAIYFLLNDSFVCGQYYYYGV). Over 95–143 (LHENKLATVGHEPKPLLPELVENGELLREEEDMIQGGSSAESPRSSRRR) the chain is Cytoplasmic. Ser136 is subject to Phosphoserine. A helical transmembrane segment spans residues 144–164 (SAITAALAIAHTISTASAYPL). The Vacuolar portion of the chain corresponds to 165 to 184 (NVGSTQSQVGPPGDGKNSQL). Residues 185 to 205 (GTILSWIGASFYVGARIPQLI) traverse the membrane as a helical segment. Residues 185-247 (GTILSWIGAS…SCRFLDNQNK (63 aa)) enclose the PQ-loop 2 domain. Over 206-215 (KNYNRKSTDG) the chain is Cytoplasmic. Residues 216–236 (LSPFLFATTLLCNITYNLSIF) form a helical membrane-spanning segment. Topologically, residues 237-249 (TSCRFLDNQNKRE) are vacuolar. The helical transmembrane segment at 250-270 (FIVNELPFIFGSAGTIAFDLI) threads the bilayer. Residues 271–317 (YFYQYYILYATDMQLRELERELYSPEEDSAAQLVTERTSLLSGETQT) are Cytoplasmic-facing.

The protein belongs to the laat-1 family.

It localises to the vacuole membrane. It catalyses the reaction L-histidine(out) + L-arginine(in) = L-histidine(in) + L-arginine(out). In terms of biological role, amino acid transporter that moves arginine across the vacuolar membrane. Active during nitrogen starvation when it exports stored vacuolar arginine to the cytosol, for use as a nitrogen source. Has been shown to function as an arginine/histidine antiporter when substrate is present on both sides of the membrane, but may also function as a uniporter. The sequence is that of Vacuolar arginine/histidine antiporter YPQ2 (YPQ2) from Saccharomyces cerevisiae (strain ATCC 204508 / S288c) (Baker's yeast).